A 258-amino-acid polypeptide reads, in one-letter code: TLC domain-containing protein 4-A (258 aa).

Helical transmembrane passes span 5 to 25 (LISY…FSAI), 52 to 72 (FVST…LAYD), 85 to 105 (FWVK…LLLL), 116 to 132 (YMVC…GYVL), 171 to 191 (PVLL…IAVI), and 212 to 232 (IGPQ…NVFW). A TLC domain is found at 43–245 (GKQCEWDSRF…IARGFYKVVK (203 aa)).

It belongs to the TLCD4 family.

It is found in the membrane. This chain is TLC domain-containing protein 4-A (tlcd4-a), found in Xenopus laevis (African clawed frog).